Here is a 474-residue protein sequence, read N- to C-terminus: ATP synthase subunit beta 1 (474 aa).

157 to 164 (GGAGVGKT) lines the ATP pocket.

Belongs to the ATPase alpha/beta chains family. As to quaternary structure, F-type ATPases have 2 components, CF(1) - the catalytic core - and CF(0) - the membrane proton channel. CF(1) has five subunits: alpha(3), beta(3), gamma(1), delta(1), epsilon(1). CF(0) has three main subunits: a(1), b(2) and c(9-12). The alpha and beta chains form an alternating ring which encloses part of the gamma chain. CF(1) is attached to CF(0) by a central stalk formed by the gamma and epsilon chains, while a peripheral stalk is formed by the delta and b chains.

It is found in the cell inner membrane. The enzyme catalyses ATP + H2O + 4 H(+)(in) = ADP + phosphate + 5 H(+)(out). Functionally, produces ATP from ADP in the presence of a proton gradient across the membrane. The catalytic sites are hosted primarily by the beta subunits. In Polaromonas naphthalenivorans (strain CJ2), this protein is ATP synthase subunit beta 1.